We begin with the raw amino-acid sequence, 221 residues long: PKHD-type hydroxylase PMT_0286 (221 aa).

The region spanning 80–174 (HIHGVMFSRS…RLVCVGWIQS (95 aa)) is the Fe2OG dioxygenase domain. Residues His-98, Asp-100, and His-155 each contribute to the Fe cation site. Residue Arg-165 participates in 2-oxoglutarate binding.

Fe(2+) is required as a cofactor. L-ascorbate serves as cofactor.

The polypeptide is PKHD-type hydroxylase PMT_0286 (Prochlorococcus marinus (strain MIT 9313)).